Here is a 434-residue protein sequence, read N- to C-terminus: Serine hydroxymethyltransferase (434 aa).

(6S)-5,6,7,8-tetrahydrofolate is bound by residues L133 and 137 to 139 (GHL). An N6-(pyridoxal phosphate)lysine modification is found at K242.

It belongs to the SHMT family. As to quaternary structure, homodimer. The cofactor is pyridoxal 5'-phosphate.

The protein resides in the cytoplasm. It carries out the reaction (6R)-5,10-methylene-5,6,7,8-tetrahydrofolate + glycine + H2O = (6S)-5,6,7,8-tetrahydrofolate + L-serine. The protein operates within one-carbon metabolism; tetrahydrofolate interconversion. It functions in the pathway amino-acid biosynthesis; glycine biosynthesis; glycine from L-serine: step 1/1. Its function is as follows. Catalyzes the reversible interconversion of serine and glycine with tetrahydrofolate (THF) serving as the one-carbon carrier. This reaction serves as the major source of one-carbon groups required for the biosynthesis of purines, thymidylate, methionine, and other important biomolecules. Also exhibits THF-independent aldolase activity toward beta-hydroxyamino acids, producing glycine and aldehydes, via a retro-aldol mechanism. This chain is Serine hydroxymethyltransferase, found in Methylobacterium radiotolerans (strain ATCC 27329 / DSM 1819 / JCM 2831 / NBRC 15690 / NCIMB 10815 / 0-1).